A 1579-amino-acid polypeptide reads, in one-letter code: Pentafunctional AROM polypeptide (1579 aa).

Residues 1-383 (MLVKVPILGR…YGKSAHVVSD (383 aa)) form a 3-dehydroquinate synthase region. Residues 40-42 (DSN), 75-78 (EANK), 106-108 (GGI), and Asp-111 contribute to the NAD(+) site. Arg-122 provides a ligand contact to 7-phospho-2-dehydro-3-deoxy-D-arabino-heptonate. 131 to 132 (TS) provides a ligand contact to NAD(+). 2 residues coordinate 7-phospho-2-dehydro-3-deoxy-D-arabino-heptonate: Asp-138 and Lys-144. Position 153 (Lys-153) interacts with NAD(+). Asn-154 serves as a coordination point for 7-phospho-2-dehydro-3-deoxy-D-arabino-heptonate. NAD(+) is bound by residues 171-174 (WLQS) and Asn-182. Glu-186 lines the Zn(2+) pocket. Residues 186–189 (EVIK) and Lys-249 each bind 7-phospho-2-dehydro-3-deoxy-D-arabino-heptonate. Catalysis depends on Glu-259, which acts as the Proton acceptor; for 3-dehydroquinate synthase activity. Residues 263–267 (RNLLN) and His-270 each bind 7-phospho-2-dehydro-3-deoxy-D-arabino-heptonate. His-270 lines the Zn(2+) pocket. Catalysis depends on His-274, which acts as the Proton acceptor; for 3-dehydroquinate synthase activity. 7-phospho-2-dehydro-3-deoxy-D-arabino-heptonate is bound by residues His-286 and Lys-355. His-286 contacts Zn(2+). The segment at 396–862 (VYPFNNIPRD…WDVLHTELGA (467 aa)) is EPSP synthase. Cys-844 acts as the For EPSP synthase activity in catalysis. The interval 881–1071 (SVVIIGMRAA…IPTRRSAFVC (191 aa)) is shikimate kinase. ATP is bound at residue 886–893 (GMRAAGKT). Residues 1072-1284 (LTFENLTEYT…AAPGQLTVAE (213 aa)) form a 3-dehydroquinase region. His-1189 (proton acceptor; for 3-dehydroquinate dehydratase activity) is an active-site residue. The active-site Schiff-base intermediate with substrate; for 3-dehydroquinate dehydratase activity is the Lys-1218. Residues 1297–1579 (KKDFFVVGSP…KAIYDAVTEI (283 aa)) are shikimate dehydrogenase.

It in the N-terminal section; belongs to the sugar phosphate cyclases superfamily. Dehydroquinate synthase family. This sequence in the 2nd section; belongs to the EPSP synthase family. The protein in the 3rd section; belongs to the shikimate kinase family. In the 4th section; belongs to the type-I 3-dehydroquinase family. It in the C-terminal section; belongs to the shikimate dehydrogenase family. As to quaternary structure, homodimer. Requires Zn(2+) as cofactor.

Its subcellular location is the cytoplasm. The enzyme catalyses 7-phospho-2-dehydro-3-deoxy-D-arabino-heptonate = 3-dehydroquinate + phosphate. The catalysed reaction is 3-dehydroquinate = 3-dehydroshikimate + H2O. It catalyses the reaction shikimate + NADP(+) = 3-dehydroshikimate + NADPH + H(+). It carries out the reaction shikimate + ATP = 3-phosphoshikimate + ADP + H(+). The enzyme catalyses 3-phosphoshikimate + phosphoenolpyruvate = 5-O-(1-carboxyvinyl)-3-phosphoshikimate + phosphate. It participates in metabolic intermediate biosynthesis; chorismate biosynthesis; chorismate from D-erythrose 4-phosphate and phosphoenolpyruvate: step 2/7. Its pathway is metabolic intermediate biosynthesis; chorismate biosynthesis; chorismate from D-erythrose 4-phosphate and phosphoenolpyruvate: step 3/7. It functions in the pathway metabolic intermediate biosynthesis; chorismate biosynthesis; chorismate from D-erythrose 4-phosphate and phosphoenolpyruvate: step 4/7. The protein operates within metabolic intermediate biosynthesis; chorismate biosynthesis; chorismate from D-erythrose 4-phosphate and phosphoenolpyruvate: step 5/7. It participates in metabolic intermediate biosynthesis; chorismate biosynthesis; chorismate from D-erythrose 4-phosphate and phosphoenolpyruvate: step 6/7. Functionally, the AROM polypeptide catalyzes 5 consecutive enzymatic reactions in prechorismate polyaromatic amino acid biosynthesis. The sequence is that of Pentafunctional AROM polypeptide from Candida glabrata (strain ATCC 2001 / BCRC 20586 / JCM 3761 / NBRC 0622 / NRRL Y-65 / CBS 138) (Yeast).